Here is a 158-residue protein sequence, read N- to C-terminus: Transcription elongation factor GreA (158 aa).

The stretch at 53 to 73 forms a coiled coil; the sequence is EQQSFIEGRIQEIEGKLSNAQ.

The protein belongs to the GreA/GreB family.

Its function is as follows. Necessary for efficient RNA polymerase transcription elongation past template-encoded arresting sites. The arresting sites in DNA have the property of trapping a certain fraction of elongating RNA polymerases that pass through, resulting in locked ternary complexes. Cleavage of the nascent transcript by cleavage factors such as GreA or GreB allows the resumption of elongation from the new 3'terminus. GreA releases sequences of 2 to 3 nucleotides. This is Transcription elongation factor GreA from Halorhodospira halophila (strain DSM 244 / SL1) (Ectothiorhodospira halophila (strain DSM 244 / SL1)).